The primary structure comprises 231 residues: Biosynthetic peptidoglycan transglycosylase (231 aa).

Residues 12 to 34 (AAVLAGLALLLVALAVSYRWVPP) form a helical membrane-spanning segment.

The protein belongs to the glycosyltransferase 51 family.

The protein localises to the cell inner membrane. It catalyses the reaction [GlcNAc-(1-&gt;4)-Mur2Ac(oyl-L-Ala-gamma-D-Glu-L-Lys-D-Ala-D-Ala)](n)-di-trans,octa-cis-undecaprenyl diphosphate + beta-D-GlcNAc-(1-&gt;4)-Mur2Ac(oyl-L-Ala-gamma-D-Glu-L-Lys-D-Ala-D-Ala)-di-trans,octa-cis-undecaprenyl diphosphate = [GlcNAc-(1-&gt;4)-Mur2Ac(oyl-L-Ala-gamma-D-Glu-L-Lys-D-Ala-D-Ala)](n+1)-di-trans,octa-cis-undecaprenyl diphosphate + di-trans,octa-cis-undecaprenyl diphosphate + H(+). It participates in cell wall biogenesis; peptidoglycan biosynthesis. In terms of biological role, peptidoglycan polymerase that catalyzes glycan chain elongation from lipid-linked precursors. The chain is Biosynthetic peptidoglycan transglycosylase from Rhodospirillum centenum (strain ATCC 51521 / SW).